The sequence spans 299 residues: Probable 4-deoxy-4-formamido-L-arabinose-phosphoundecaprenol deformylase ArnD (299 aa).

The region spanning 2–263 (IDVGLRIDVD…EASARGIRFV (262 aa)) is the NodB homology domain.

The protein belongs to the polysaccharide deacetylase family. ArnD deformylase subfamily.

It carries out the reaction 4-deoxy-4-formamido-alpha-L-arabinopyranosyl di-trans,octa-cis-undecaprenyl phosphate + H2O = 4-amino-4-deoxy-alpha-L-arabinopyranosyl di-trans,octa-cis-undecaprenyl phosphate + formate. The protein operates within glycolipid biosynthesis; 4-amino-4-deoxy-alpha-L-arabinose undecaprenyl phosphate biosynthesis; 4-amino-4-deoxy-alpha-L-arabinose undecaprenyl phosphate from UDP-4-deoxy-4-formamido-beta-L-arabinose and undecaprenyl phosphate: step 2/2. It functions in the pathway bacterial outer membrane biogenesis; lipopolysaccharide biosynthesis. Catalyzes the deformylation of 4-deoxy-4-formamido-L-arabinose-phosphoundecaprenol to 4-amino-4-deoxy-L-arabinose-phosphoundecaprenol. The modified arabinose is attached to lipid A and is required for resistance to polymyxin and cationic antimicrobial peptides. In Aeromonas salmonicida (strain A449), this protein is Probable 4-deoxy-4-formamido-L-arabinose-phosphoundecaprenol deformylase ArnD.